A 984-amino-acid polypeptide reads, in one-letter code: E3 ubiquitin-protein ligase BRE1A (984 aa).

The segment at 1-34 (MSGAGNKRAAGEPGPSAPPEKKAGVEDSGTTVET) is disordered. The stretch at 43–90 (TEELDIRTLQTKNRKLAEMLDQRQAIEDELREHIEKLERRQATDDASL) forms a coiled coil. The tract at residues 128–150 (VVPEPEPDSDSNQERKDERERGE) is disordered. Residues 139–150 (NQERKDERERGE) show a composition bias toward basic and acidic residues. Coiled-coil stretches lie at residues 236–378 (ADTL…VKET) and 429–907 (SLHK…TTKK). Residues 506–632 (SDLSKIRSRS…KHEDGRKKEA (127 aa)) are disordered. Residues 514–526 (RSGSALLQSQSST) are compositionally biased toward polar residues. Basic and acidic residues-rich tracts occupy residues 527-540 (EDTK…KQEP) and 558-632 (SEVK…KKEA). The segment at 931-970 (CPCCNMRKKDAVLTKCFHVFCFECVKTRYDTRQRKCPKCN) adopts an RING-type zinc-finger fold.

This sequence belongs to the BRE1 family. In terms of assembly, component of the RNF20/40 complex (also known as BRE1 complex).

It is found in the nucleus. The enzyme catalyses S-ubiquitinyl-[E2 ubiquitin-conjugating enzyme]-L-cysteine + [acceptor protein]-L-lysine = [E2 ubiquitin-conjugating enzyme]-L-cysteine + N(6)-ubiquitinyl-[acceptor protein]-L-lysine.. It functions in the pathway protein modification; protein ubiquitination. Component of the RNF20/40 E3 ubiquitin-protein ligase complex that mediates monoubiquitination of 'Lys-120' of histone H2B (H2BK120ub1). H2BK120ub1 gives a specific tag for epigenetic transcriptional activation and is also prerequisite for histone H3 'Lys-4' and 'Lys-79' methylation (H3K4me and H3K79me, respectively). The chain is E3 ubiquitin-protein ligase BRE1A (RNF20) from Gallus gallus (Chicken).